Consider the following 98-residue polypeptide: Competence protein ComGC (98 aa).

A propeptide spanning residues 1–5 (MNEKG) is cleaved from the precursor. Residues 4 to 29 (KGFTLVEMLIVLFIISILLLITIPNV) form a may be involved in polymerization of ComGC region. Phe6 carries the post-translational modification N-methylphenylalanine. The helical transmembrane segment at 6 to 26 (FTLVEMLIVLFIISILLLITI) threads the bilayer. A disulfide bridge links Cys41 with Cys81.

The protein belongs to the ComGC family. As to quaternary structure, the transformation pili are flexible filaments, consisting mainly of the major pilin ComGC and smaller amounts of the minor pilins, including at least ComGD, ComGF and ComGG. Homodimer. Forms higher-order multimers. Interacts with ComGG; the interaction is probably direct. Post-translationally, processing of ComGC in competent cells requires ComC, while stabilization, possibly by formation of a disulfide bond, requires BdbC and BdbD.

Its subcellular location is the cell membrane. The protein localises to the cell surface. It is found in the fimbrium. In terms of biological role, major component of the type IV-like pilus (T4P) that plays a role in transformation. Transformation pili are dynamically extended and retracted, perhaps thereby promoting DNA uptake and transformation. Required for transformation and DNA binding. The chain is Competence protein ComGC (comGC) from Bacillus subtilis (strain 168).